An 89-amino-acid chain; its full sequence is Small ribosomal subunit protein uS15 (89 aa).

It belongs to the universal ribosomal protein uS15 family. Part of the 30S ribosomal subunit. Forms a bridge to the 50S subunit in the 70S ribosome, contacting the 23S rRNA.

One of the primary rRNA binding proteins, it binds directly to 16S rRNA where it helps nucleate assembly of the platform of the 30S subunit by binding and bridging several RNA helices of the 16S rRNA. In terms of biological role, forms an intersubunit bridge (bridge B4) with the 23S rRNA of the 50S subunit in the ribosome. This Streptococcus uberis (strain ATCC BAA-854 / 0140J) protein is Small ribosomal subunit protein uS15.